A 256-amino-acid chain; its full sequence is NAP1-related protein 1 (256 aa).

A coiled-coil region spans residues 23–64 (IDAELVLSIEKLQEIQDDLEKINEKASDEVLEVEQKYNVIRK). The disordered stretch occupies residues 220 to 256 (LTYFNNDADEEDFDGDDDGDEEGEEDDDDEEEEDGEE). The span at 226 to 256 (DADEEDFDGDDDGDEEGEEDDDDEEEEDGEE) shows a compositional bias: acidic residues.

It belongs to the nucleosome assembly protein (NAP) family. Can form homomeric and heteromeric protein complexes with NRP2. Binds histones H2A and H2B and associates with chromatin in vivo. As to expression, ubiquitous.

The protein localises to the cytoplasm. It is found in the nucleus. Its function is as follows. Acts as a histone H2A/H2B chaperone in nucleosome assembly, playing a critical role for the correct expression of genes involved in root proliferation and patterning. Required with NRP2 for the maintenance of cell proliferation and differentiation in postembryonic root growth. Involved in both intramolecular and intermolecular somatic homologous recombination. The sequence is that of NAP1-related protein 1 (NRP1) from Arabidopsis thaliana (Mouse-ear cress).